The sequence spans 103 residues: UPF0145 protein BCE_5284 (103 aa).

Belongs to the UPF0145 family.

This is UPF0145 protein BCE_5284 from Bacillus cereus (strain ATCC 10987 / NRS 248).